Reading from the N-terminus, the 459-residue chain is Argininosuccinate lyase (459 aa).

Belongs to the lyase 1 family. Argininosuccinate lyase subfamily.

The protein localises to the cytoplasm. It catalyses the reaction 2-(N(omega)-L-arginino)succinate = fumarate + L-arginine. It participates in amino-acid biosynthesis; L-arginine biosynthesis; L-arginine from L-ornithine and carbamoyl phosphate: step 3/3. The chain is Argininosuccinate lyase from Lactococcus lactis subsp. lactis (strain IL1403) (Streptococcus lactis).